The primary structure comprises 592 residues: V-type ATP synthase alpha chain (592 aa).

ATP is bound at residue 232–239 (GPFGSGKT).

This sequence belongs to the ATPase alpha/beta chains family.

It carries out the reaction ATP + H2O + 4 H(+)(in) = ADP + phosphate + 5 H(+)(out). In terms of biological role, produces ATP from ADP in the presence of a proton gradient across the membrane. The V-type alpha chain is a catalytic subunit. The sequence is that of V-type ATP synthase alpha chain from Clostridioides difficile (strain 630) (Peptoclostridium difficile).